The chain runs to 352 residues: Protein Wnt-11 (352 aa).

An N-terminal signal peptide occupies residues 1–22 (MKIYFLLGTFLTFLLHTRICQG). 2 N-linked (GlcNAc...) asparagine glycosylation sites follow: Asn38 and Asn88. Intrachain disulfides connect Cys78–Cys89, Cys128–Cys136, Cys138–Cys155, Cys207–Cys221, and Cys209–Cys216. Ser213 carries the O-palmitoleoyl serine; by PORCN lipid modification. Residues Tyr273 and Tyr280 each carry the sulfotyrosine modification. Disulfide bonds link Cys281–Cys312, Cys297–Cys307, Cys311–Cys351, Cys327–Cys342, Cys329–Cys339, and Cys334–Cys335. A glycan (N-linked (GlcNAc...) asparagine) is linked at Asn298.

It belongs to the Wnt family. Glycosylation is required for protein secretion. Post-translationally, palmitoleoylation is required for efficient binding to frizzled receptors. Depalmitoleoylation leads to Wnt signaling pathway inhibition. In terms of tissue distribution, in embryos, expressed in the neural tube, dorsal somite, mesenchymal cells within the dorsal fin, branchial arches and heart muscle, becoming expressed throughout the myocardium by the tadpole stage (stage 45). Prior to neural crest cell migration, expressed in a domain flanking the neural crest on the medial or neural (the opposite side to wnt11b). Weakly expressed in the developing pronephros from stage 25, with expression increasing from stages 30 to 35.

It localises to the secreted. The protein localises to the extracellular space. It is found in the extracellular matrix. In terms of biological role, ligand for members of the frizzled family of seven transmembrane receptors. Shares much functionality with wnt11b. Signals through a non-canonical Wnt pathway to activate Jun-N-terminal kinase (JNK) to regulate gastrulation movements. Acts in a non-cell-autonomous manner to control neural crest migration, probably acting as an extracellular signal from surrounding tissue, but is not required for neural crest induction. Acts redundantly with wnt11b during pronephros induction. Regulates cardiac morphogenesis through the activation of JNK, but is not required for cardiac differentiation. Essential for dorsal fin development; required for an epithelial to mesenchymal transformation event prior to migration of cells into the fin, and ultimately for maintenance of fin structure. Mediates dorsal fin development through a non-canonical pathway mediated by Ca(2+). This Xenopus laevis (African clawed frog) protein is Protein Wnt-11.